The chain runs to 150 residues: Sulfur-rich protein, serovar D (150 aa).

The next 2 membrane-spanning stretches (helical) occupy residues 41 to 61 and 67 to 87; these read VGLV…LVSA and AIYL…VGIL.

It localises to the membrane. The chain is Sulfur-rich protein, serovar D (srp) from Chlamydia trachomatis serovar D (strain ATCC VR-885 / DSM 19411 / UW-3/Cx).